Reading from the N-terminus, the 291-residue chain is 4-diphosphocytidyl-2-C-methyl-D-erythritol kinase (291 aa).

Residue lysine 19 is part of the active site. 102-112 contacts ATP; that stretch reads PMGGGIGGGSS. Aspartate 144 is a catalytic residue.

Belongs to the GHMP kinase family. IspE subfamily.

The enzyme catalyses 4-CDP-2-C-methyl-D-erythritol + ATP = 4-CDP-2-C-methyl-D-erythritol 2-phosphate + ADP + H(+). It participates in isoprenoid biosynthesis; isopentenyl diphosphate biosynthesis via DXP pathway; isopentenyl diphosphate from 1-deoxy-D-xylulose 5-phosphate: step 3/6. In terms of biological role, catalyzes the phosphorylation of the position 2 hydroxy group of 4-diphosphocytidyl-2C-methyl-D-erythritol. In Ectopseudomonas mendocina (strain ymp) (Pseudomonas mendocina), this protein is 4-diphosphocytidyl-2-C-methyl-D-erythritol kinase.